A 140-amino-acid polypeptide reads, in one-letter code: Regulator of ribonuclease activity B (140 aa).

A disordered region spans residues 115 to 140; the sequence is FEDPNAQDDDEDDGEAIDEDDNGIRH. Acidic residues predominate over residues 119–140; sequence NAQDDDEDDGEAIDEDDNGIRH.

Belongs to the RraB family. Interacts with the C-terminal region of Rne.

It localises to the cytoplasm. In terms of biological role, globally modulates RNA abundance by binding to RNase E (Rne) and regulating its endonucleolytic activity. Can modulate Rne action in a substrate-dependent manner by altering the composition of the degradosome. This is Regulator of ribonuclease activity B from Pantoea ananatis (strain LMG 20103).